The sequence spans 422 residues: Ubiquitin-conjugating enzyme E2 Q1 (422 aa).

At methionine 1 the chain carries N-acetylmethionine. Residues 1–24 (MQQPQPQGQQQPGPGQQLGVQGAA) show a composition bias toward low complexity. Disordered regions lie at residues 1 to 40 (MQQP…PGPC) and 173 to 221 (QPLP…EDDG). Residues 25 to 35 (PGAGGGPGGGP) are compositionally biased toward gly residues. Positions 185–200 (VSSEDEDEEMPEDTED) are enriched in acidic residues. The span at 212-221 (AEGKKSEDDG) shows a compositional bias: basic and acidic residues. The UBC core domain maps to 251-415 (QATDRLMKEL…VQIHEKNGWY (165 aa)). The active-site Glycyl thioester intermediate is the cysteine 351.

The protein belongs to the ubiquitin-conjugating enzyme family. As to quaternary structure, monomer and homodimer. Only the homodimer is linked to ubiquitin through thiolester activation. Interacts (via N-terminus) with B4GALT1 (via N-terminal cytoplasmic domain); the interaction is direct. Autoubiquitinated in vitro in the presence of NEDD4L. Expressed in liver, brain, heart, spleen, lung, kidney, muscle, ovary, epididymis, testis and placenta. Also expressed in thymus and ES cells. Only expressed in the uterus during pregnancy. Expressed in oocytes and during subsequent embryonic development stages (4-cell stage, blastocyst, 8.5 dpc, 13.5 dpc, 16.5 dpc and 18.5 dpc).

It localises to the nucleus. Its subcellular location is the cell projection. It is found in the filopodium. The protein resides in the cytoplasm. The protein localises to the cytosol. It carries out the reaction S-ubiquitinyl-[E1 ubiquitin-activating enzyme]-L-cysteine + [E2 ubiquitin-conjugating enzyme]-L-cysteine = [E1 ubiquitin-activating enzyme]-L-cysteine + S-ubiquitinyl-[E2 ubiquitin-conjugating enzyme]-L-cysteine.. Its pathway is protein modification; protein ubiquitination. Its function is as follows. Catalyzes the covalent attachment of ubiquitin to other proteins. Involved in female fertility and embryo implantation. May be involved in hormonal homeostasis in females. Involved in regulation of B4GALT1 cell surface expression, B4GALT1-mediated cell adhesion to laminin and embryoid body formation. This is Ubiquitin-conjugating enzyme E2 Q1 (Ube2q1) from Mus musculus (Mouse).